A 261-amino-acid chain; its full sequence is DNA repair protein RecO (261 aa).

Belongs to the RecO family.

Its function is as follows. Involved in DNA repair and RecF pathway recombination. The polypeptide is DNA repair protein RecO (Limosilactobacillus reuteri (strain DSM 20016) (Lactobacillus reuteri)).